A 389-amino-acid polypeptide reads, in one-letter code: Abscission/NoCut checkpoint regulator (389 aa).

An FYVE-type zinc finger spans residues Met1–Thr58. Zn(2+)-binding residues include Cys5, Cys8, Cys21, Cys24, Cys29, Cys32, Cys50, and Cys53. Ser69 carries the phosphoserine modification. The MIM1-A motif lies at Asp99 to Glu112. Residue Lys132 forms a Glycyl lysine isopeptide (Lys-Gly) (interchain with G-Cter in SUMO2) linkage. Disordered stretches follow at residues Pro158 to Gln177 and Gln204 to Leu227. The segment covering Gln167–Gln177 has biased composition (low complexity). Residues Ser214–Ser226 are compositionally biased toward polar residues. Position 219 is a phosphoserine (Ser219). The stretch at Ser226–Val261 forms a coiled coil. The MIM1-B signature appears at Ile252 to Gln265. Position 280 is a phosphoserine (Ser280).

In terms of assembly, interacts (via MIM1-B) with VPS4A; interaction takes place at the midbody ring following cytokinesis checkpoint activation.

The protein resides in the cytoplasm. It localises to the cytoskeleton. Its subcellular location is the microtubule organizing center. It is found in the centrosome. The protein localises to the cleavage furrow. The protein resides in the midbody. It localises to the midbody ring. Key regulator of abscission step in cytokinesis: part of the cytokinesis checkpoint, a process required to delay abscission to prevent both premature resolution of intercellular chromosome bridges and accumulation of DNA damage. Together with CHMP4C, required to retain abscission-competent VPS4 (VPS4A and/or VPS4B) at the midbody ring until abscission checkpoint signaling is terminated at late cytokinesis. Deactivation of AURKB results in dephosphorylation of CHMP4C followed by its dissociation from ZFYVE19/ANCHR and VPS4 and subsequent abscission. This is Abscission/NoCut checkpoint regulator (Zfyve19) from Mus musculus (Mouse).